We begin with the raw amino-acid sequence, 218 residues long: Ras-related protein Rab-4A (218 aa).

9 residues coordinate GTP: G23, T24, G25, K26, S27, C28, S42, H44, and T45. Position 27 (S27) interacts with Mg(2+). The short motif at 44–49 (HTIGVE) is the Switch 1 element. The Mg(2+) site is built by T45 and D68. The Switch 2 signature appears at 70–79 (AGQERFRSVT). G71 contacts GTP. Q72 is subject to 5-glutamyl serotonin. Residues N126, K127, D129, A157, and L158 each contribute to the GTP site. A Phosphoserine modification is found at S190. S204 carries the post-translational modification Phosphoserine; by CDK1. Residues C216 and C218 are each lipidated (S-geranylgeranyl cysteine). C218 is subject to Cysteine methyl ester.

This sequence belongs to the small GTPase superfamily. Rab family. As to quaternary structure, interacts with SGSM1, SGSM2 and SGSM3. Interacts with RAB11FIP1, RABEP1, ZFYVE20 and RUFY1. Interacts (membrane-bound form) with NDRG1; the interaction involves NDRG1 in vesicular recycling of E-cadherin. Interacts (in GTP-bound form) with GRIPAP1 (via N-terminus). Interacts with RABEP1 and RBSN. Does not interact with HPS4. Does not interact with HPS4. Interacts with RABEP2; this interaction may mediate VEGFR2 cell surface expression. It depends on Mg(2+) as a cofactor. In terms of processing, serotonylation of Gln-72 by TGM2 during activation and aggregation of platelets leads to constitutive activation of GTPase activity. Post-translationally, phosphorylated by CDK1 kinase during mitosis. Expressed in the central nervous system, including cortex, cerebellum, midbrain and spinal cord, and in the kidney, lung, liver and spleen.

It localises to the membrane. Its subcellular location is the cytoplasm. The protein localises to the early endosome membrane. It is found in the recycling endosome membrane. It carries out the reaction GTP + H2O = GDP + phosphate + H(+). Its activity is regulated as follows. Regulated by guanine nucleotide exchange factors (GEFs) which promote the exchange of bound GDP for free GTP. Regulated by GTPase activating proteins (GAPs) which increase the GTP hydrolysis activity. Inhibited by GDP dissociation inhibitors (GDIs). The small GTPases Rab are key regulators of intracellular membrane trafficking, from the formation of transport vesicles to their fusion with membranes. Rabs cycle between an inactive GDP-bound form and an active GTP-bound form that is able to recruit to membranes different sets of downstream effectors directly responsible for vesicle formation, movement, tethering and fusion. RAB4A is involved in protein transport. Also plays a role in vesicular traffic. Mediates VEGFR2 endosomal trafficking to enhance VEGFR2 signaling. Acts as a regulator of platelet alpha-granule release during activation and aggregation of platelets. The sequence is that of Ras-related protein Rab-4A from Mus musculus (Mouse).